We begin with the raw amino-acid sequence, 116 residues long: Putative antiporter subunit mnhC2 (116 aa).

The next 3 membrane-spanning stretches (helical) occupy residues 3-23, 28-48, and 72-92; these read LILLMVIGFLIFIGTYMILSV, IVIGISIYTHAGNLIIMSMGN, and AIVLTAIVIGFAMTAFLLVLV.

It belongs to the CPA3 antiporters (TC 2.A.63) subunit C family. May form a heterooligomeric complex that consists of seven subunits: mnhA2, mnhB2, mnhC2, mnhD2, mnhE2, mnhF2 and mnhG2.

Its subcellular location is the cell membrane. The chain is Putative antiporter subunit mnhC2 (mnhC2) from Staphylococcus saprophyticus subsp. saprophyticus (strain ATCC 15305 / DSM 20229 / NCIMB 8711 / NCTC 7292 / S-41).